The sequence spans 343 residues: Heat-inducible transcription repressor HrcA (343 aa).

This sequence belongs to the HrcA family.

In terms of biological role, negative regulator of class I heat shock genes (grpE-dnaK-dnaJ and groELS operons). Prevents heat-shock induction of these operons. The chain is Heat-inducible transcription repressor HrcA from Mycobacterium leprae (strain Br4923).